The chain runs to 763 residues: Fibroblast growth factor receptor (763 aa).

The signal sequence occupies residues 1 to 27; sequence MKEFEVKVASTAFVLVLFSLTINQILA. Residues 28-291 are Extracellular-facing; sequence SETSTKFRSP…ITKGIPNETN (264 aa). The segment at 34–74 is disordered; it reads FRSPVPAPTVPDWNHLPNEGNEENVVSAPKQDGASGGQKPY. Ig-like C2-type domains lie at 73-164 and 173-270; these read PYWT…YQLD and PILA…AWLS. A disulfide bridge links cysteine 98 with cysteine 148. N-linked (GlcNAc...) asparagine glycans are attached at residues asparagine 158, asparagine 182, asparagine 220, asparagine 230, asparagine 243, and asparagine 288. Cysteine 195 and cysteine 254 are joined by a disulfide. The chain crosses the membrane as a helical span at residues 292 to 312; the sequence is IIIYVMCGVLVILFGLAVVLV. Residues 313–763 are Cytoplasmic-facing; sequence LYYHCYNGKD…NEHARLRSEA (451 aa). A Protein kinase domain is found at 382–672; sequence ITLVERLDEG…TLVEDLDRML (291 aa). ATP-binding positions include 388 to 396 and lysine 417; that span reads LDEGFFGQV. Aspartate 537 functions as the Proton acceptor in the catalytic mechanism. A Phosphotyrosine; by autocatalysis modification is found at tyrosine 568. Residues 691–711 are compositionally biased toward acidic residues; the sequence is YSESSEDESESQNSDEEDDDS. Residues 691–742 form a disordered region; it reads YSESSEDESESQNSDEEDDDSVFERMRQIDSLSNGNIPFNEEDSSNSDPYVA.

This sequence belongs to the protein kinase superfamily. Tyr protein kinase family. Fibroblast growth factor receptor subfamily.

Its subcellular location is the membrane. It carries out the reaction L-tyrosyl-[protein] + ATP = O-phospho-L-tyrosyl-[protein] + ADP + H(+). Receptor for basic fibroblast growth factor. This Halocynthia roretzi (Sea squirt) protein is Fibroblast growth factor receptor (FGFR).